Here is a 282-residue protein sequence, read N- to C-terminus: Pantothenate synthetase (282 aa).

Residue 30 to 37 participates in ATP binding; that stretch reads MGFLHDGH. Catalysis depends on His37, which acts as the Proton donor. Gln60 lines the (R)-pantoate pocket. Gln60 is a binding site for beta-alanine. 146 to 149 is a binding site for ATP; it reads GQKD. Gln152 lines the (R)-pantoate pocket. Residues Ile175 and 183–186 each bind ATP; that span reads KSSR.

It belongs to the pantothenate synthetase family. As to quaternary structure, homodimer.

The protein localises to the cytoplasm. It catalyses the reaction (R)-pantoate + beta-alanine + ATP = (R)-pantothenate + AMP + diphosphate + H(+). It functions in the pathway cofactor biosynthesis; (R)-pantothenate biosynthesis; (R)-pantothenate from (R)-pantoate and beta-alanine: step 1/1. Catalyzes the condensation of pantoate with beta-alanine in an ATP-dependent reaction via a pantoyl-adenylate intermediate. The polypeptide is Pantothenate synthetase (Campylobacter jejuni (strain RM1221)).